Reading from the N-terminus, the 186-residue chain is TATA-box-binding protein F (186 aa).

2 repeat units span residues 10-86 (IENV…FDDL) and 101-179 (VQNI…NDRL).

The protein belongs to the TBP family.

Its function is as follows. General factor that plays a role in the activation of archaeal genes transcribed by RNA polymerase. Binds specifically to the TATA box promoter element which lies close to the position of transcription initiation. The protein is TATA-box-binding protein F (tbpF) of Halobacterium salinarum (strain ATCC 700922 / JCM 11081 / NRC-1) (Halobacterium halobium).